The primary structure comprises 63 residues: Large ribosomal subunit protein uL30 (63 aa).

The protein belongs to the universal ribosomal protein uL30 family. In terms of assembly, part of the 50S ribosomal subunit.

This is Large ribosomal subunit protein uL30 from Methylobacterium sp. (strain 4-46).